A 334-amino-acid polypeptide reads, in one-letter code: Spermidine synthase 1 (334 aa).

Residues 1 to 37 (MAAPENTLHSTDSPLKRQREDEVNGVSDTLSKEPQPN) are disordered. Positions 26 to 37 (VSDTLSKEPQPN) are enriched in polar residues. The 238-residue stretch at 44-281 (PGWFSEISPM…GMIGFMLCST (238 aa)) folds into the PABS domain. Residue Q75 coordinates S-adenosyl 3-(methylsulfanyl)propylamine. Y105 contacts putrescine. S-adenosyl 3-(methylsulfanyl)propylamine contacts are provided by residues Q106, D130, E150, 181–182 (DG), and D200. The Proton acceptor role is filled by D200. Putrescine-binding positions include 200–203 (DSSD) and Y269.

It belongs to the spermidine/spermine synthase family.

It catalyses the reaction S-adenosyl 3-(methylsulfanyl)propylamine + putrescine = S-methyl-5'-thioadenosine + spermidine + H(+). Its pathway is amine and polyamine biosynthesis; spermidine biosynthesis; spermidine from putrescine: step 1/1. This Pisum sativum (Garden pea) protein is Spermidine synthase 1 (SPDSYN1).